We begin with the raw amino-acid sequence, 519 residues long: Cytosol aminopeptidase (519 aa).

Residue serine 42 is modified to Phosphoserine. Lysine 45 is subject to N6-succinyllysine. The residue at position 54 (serine 54) is a Phosphoserine. N6-succinyllysine is present on residues lysine 61 and lysine 103. Serine 180 and serine 194 each carry phosphoserine. Positions 202, 203, and 205 each coordinate Zn(2+). Residue lysine 221 is modified to N6-acetyllysine; alternate. At lysine 221 the chain carries N6-succinyllysine; alternate. Serine 238 bears the Phosphoserine mark. Residues lysine 282 and aspartate 287 each coordinate Zn(2+). 4 residues coordinate substrate: lysine 282, aspartate 287, serine 292, and lysine 294. Position 287 (aspartate 287) interacts with Mg(2+). Lysine 294 is a catalytic residue. Zn(2+) is bound by residues arginine 303, aspartate 305, aspartate 364, and glutamate 366. The substrate site is built by aspartate 305 and aspartate 364. Residues aspartate 364 and glutamate 366 each coordinate Mg(2+). The active site involves arginine 368. The residue at position 455 (lysine 455) is an N6-acetyllysine; alternate. Lysine 455 carries the post-translational modification N6-succinyllysine; alternate. The residue at position 476 (lysine 476) is an N6-succinyllysine. Position 489 is an N6-acetyllysine; alternate (lysine 489). Lysine 489 is subject to N6-succinyllysine; alternate.

The protein belongs to the peptidase M17 family. Homohexamer. Zn(2+) serves as cofactor. It depends on Mn(2+) as a cofactor.

The protein resides in the cytoplasm. It carries out the reaction Release of an N-terminal amino acid, Xaa-|-Yaa-, in which Xaa is preferably Leu, but may be other amino acids including Pro although not Arg or Lys, and Yaa may be Pro. Amino acid amides and methyl esters are also readily hydrolyzed, but rates on arylamides are exceedingly low.. The catalysed reaction is an S-substituted L-cysteinylglycine + H2O = an S-substituted L-cysteine + glycine. It catalyses the reaction L-cysteinylglycine + H2O = L-cysteine + glycine. The enzyme catalyses S-benzyl-L-cysteinylglycine + H2O = S-benzyl-L-cysteine + glycine. It carries out the reaction Release of N-terminal proline from a peptide.. Cytosolic metallopeptidase that catalyzes the removal of unsubstituted N-terminal hydrophobic amino acids from various peptides. The presence of Zn(2+) ions is essential for the peptidase activity, and the association with other cofactors can modulate the substrate spectificity of the enzyme. For instance, in the presence of Mn(2+), it displays a specific Cys-Gly hydrolyzing activity of Cys-Gly-S-conjugates. Involved in the metabolism of glutathione and in the degradation of glutathione S-conjugates, which may play a role in the control of the cell redox status. This chain is Cytosol aminopeptidase, found in Sus scrofa (Pig).